Reading from the N-terminus, the 433-residue chain is Glutamate-1-semialdehyde 2,1-aminomutase (433 aa).

Lys273 is modified (N6-(pyridoxal phosphate)lysine).

Belongs to the class-III pyridoxal-phosphate-dependent aminotransferase family. HemL subfamily. As to quaternary structure, homodimer. Requires pyridoxal 5'-phosphate as cofactor.

The protein localises to the cytoplasm. The catalysed reaction is (S)-4-amino-5-oxopentanoate = 5-aminolevulinate. It functions in the pathway porphyrin-containing compound metabolism; protoporphyrin-IX biosynthesis; 5-aminolevulinate from L-glutamyl-tRNA(Glu): step 2/2. Its pathway is porphyrin-containing compound metabolism; chlorophyll biosynthesis. The protein is Glutamate-1-semialdehyde 2,1-aminomutase of Microcystis aeruginosa (strain NIES-843 / IAM M-2473).